Reading from the N-terminus, the 125-residue chain is Large ribosomal subunit protein uL22c (125 aa).

It belongs to the universal ribosomal protein uL22 family. As to quaternary structure, part of the 50S ribosomal subunit.

It is found in the plastid. Its subcellular location is the chloroplast. In terms of biological role, this protein binds specifically to 23S rRNA. The globular domain of the protein is located near the polypeptide exit tunnel on the outside of the subunit, while an extended beta-hairpin is found that lines the wall of the exit tunnel in the center of the 70S ribosome. The chain is Large ribosomal subunit protein uL22c (rpl22) from Nymphaea alba (White water-lily).